Here is a 118-residue protein sequence, read N- to C-terminus: Small ribosomal subunit protein uS13 (118 aa).

Residues 92–118 (RRSLPVRGQRTKTNARTRKGPRKPIKK) are disordered.

Belongs to the universal ribosomal protein uS13 family. In terms of assembly, part of the 30S ribosomal subunit. Forms a loose heterodimer with protein S19. Forms two bridges to the 50S subunit in the 70S ribosome.

Located at the top of the head of the 30S subunit, it contacts several helices of the 16S rRNA. In the 70S ribosome it contacts the 23S rRNA (bridge B1a) and protein L5 of the 50S subunit (bridge B1b), connecting the 2 subunits; these bridges are implicated in subunit movement. Contacts the tRNAs in the A and P-sites. The chain is Small ribosomal subunit protein uS13 from Acinetobacter baumannii (strain AB307-0294).